Reading from the N-terminus, the 116-residue chain is NADPH-dependent 7-cyano-7-deazaguanine reductase (116 aa).

Residue Cys-31 is the Thioimide intermediate of the active site. Asp-38 serves as the catalytic Proton donor. Substrate contacts are provided by residues Ile-53–Leu-55 and Tyr-72–Glu-73.

It belongs to the GTP cyclohydrolase I family. QueF type 1 subfamily.

The protein resides in the cytoplasm. The enzyme catalyses 7-aminomethyl-7-carbaguanine + 2 NADP(+) = 7-cyano-7-deazaguanine + 2 NADPH + 3 H(+). It functions in the pathway tRNA modification; tRNA-queuosine biosynthesis. In terms of biological role, catalyzes the NADPH-dependent reduction of 7-cyano-7-deazaguanine (preQ0) to 7-aminomethyl-7-deazaguanine (preQ1). The chain is NADPH-dependent 7-cyano-7-deazaguanine reductase from Chlorobium luteolum (strain DSM 273 / BCRC 81028 / 2530) (Pelodictyon luteolum).